The sequence spans 277 residues: Proteasome assembly chaperone 1 (277 aa).

Belongs to the PSMG1 family. In terms of assembly, forms a heterodimer with psmg2. Degraded by the proteasome upon completion of 20S proteasome maturation.

It localises to the cytoplasm. The protein resides in the endoplasmic reticulum. Functionally, chaperone protein which promotes assembly of the 20S proteasome as part of a heterodimer with psmg2. This chain is Proteasome assembly chaperone 1, found in Danio rerio (Zebrafish).